Here is a 212-residue protein sequence, read N- to C-terminus: MSLEMIAVLIFTMGYLLGSVPFGLILARLFGSVDVRQVGSGNIGATNVLRTGRKDLAALTLFFDIGKGALAVLLAHGFSYHLYQQTGCAPDLTLIAGAAAFLGHCYPVWLGFRGGKGVATMLGVSFAAWWVAGVVFAVAWLLSAKISRYSSVGGMVGAIAATISVMFMPASHEIHQVYIALFSGMTILLLWRHRGNIKRLLSGQESRIGDPQ.

6 consecutive transmembrane segments (helical) span residues 6–26 (IAVL…GLIL), 56–76 (LAAL…LLAH), 92–112 (LTLI…WLGF), 122–142 (LGVS…AWLL), 150–170 (SSVG…FMPA), and 171–191 (SHEI…LLLW).

It belongs to the PlsY family. As to quaternary structure, probably interacts with PlsX.

The protein localises to the cell inner membrane. The catalysed reaction is an acyl phosphate + sn-glycerol 3-phosphate = a 1-acyl-sn-glycero-3-phosphate + phosphate. It functions in the pathway lipid metabolism; phospholipid metabolism. Its function is as follows. Catalyzes the transfer of an acyl group from acyl-phosphate (acyl-PO(4)) to glycerol-3-phosphate (G3P) to form lysophosphatidic acid (LPA). This enzyme utilizes acyl-phosphate as fatty acyl donor, but not acyl-CoA or acyl-ACP. This chain is Glycerol-3-phosphate acyltransferase, found in Zymomonas mobilis subsp. mobilis (strain ATCC 31821 / ZM4 / CP4).